We begin with the raw amino-acid sequence, 198 residues long: Probable GTP-binding protein EngB (198 aa).

Positions 36-198 (SDPQFAFIGR…NLSKLQELLE (163 aa)) constitute an EngB-type G domain. Residues 44–51 (GRSNVGKS), 70–74 (GRTQL), 88–91 (DLPG), 155–158 (NKID), and 182–184 (ISA) each bind GTP. Ser-51 and Thr-72 together coordinate Mg(2+).

It belongs to the TRAFAC class TrmE-Era-EngA-EngB-Septin-like GTPase superfamily. EngB GTPase family. The cofactor is Mg(2+).

In terms of biological role, necessary for normal cell division and for the maintenance of normal septation. In Mesomycoplasma hyopneumoniae (strain J / ATCC 25934 / NCTC 10110) (Mycoplasma hyopneumoniae), this protein is Probable GTP-binding protein EngB.